The primary structure comprises 362 residues: Chorismate synthase (362 aa).

Arg47 provides a ligand contact to NADP(+). Residues 124 to 126, Gly286, 301 to 305, and Arg327 contribute to the FMN site; these read RAS and KPTAT.

The protein belongs to the chorismate synthase family. Homotetramer. Requires FMNH2 as cofactor.

The enzyme catalyses 5-O-(1-carboxyvinyl)-3-phosphoshikimate = chorismate + phosphate. The protein operates within metabolic intermediate biosynthesis; chorismate biosynthesis; chorismate from D-erythrose 4-phosphate and phosphoenolpyruvate: step 7/7. Its function is as follows. Catalyzes the anti-1,4-elimination of the C-3 phosphate and the C-6 proR hydrogen from 5-enolpyruvylshikimate-3-phosphate (EPSP) to yield chorismate, which is the branch point compound that serves as the starting substrate for the three terminal pathways of aromatic amino acid biosynthesis. This reaction introduces a second double bond into the aromatic ring system. The chain is Chorismate synthase from Prochlorococcus marinus (strain MIT 9303).